Reading from the N-terminus, the 301-residue chain is Porphobilinogen deaminase (301 aa).

The residue at position 235 (C235) is an S-(dipyrrolylmethanemethyl)cysteine.

This sequence belongs to the HMBS family. In terms of assembly, monomer. It depends on dipyrromethane as a cofactor.

It catalyses the reaction 4 porphobilinogen + H2O = hydroxymethylbilane + 4 NH4(+). Its pathway is porphyrin-containing compound metabolism; protoporphyrin-IX biosynthesis; coproporphyrinogen-III from 5-aminolevulinate: step 2/4. Its function is as follows. Tetrapolymerization of the monopyrrole PBG into the hydroxymethylbilane pre-uroporphyrinogen in several discrete steps. The sequence is that of Porphobilinogen deaminase from Thermus thermophilus (strain ATCC BAA-163 / DSM 7039 / HB27).